Reading from the N-terminus, the 238-residue chain is Ribonuclease PH (238 aa).

Phosphate is bound by residues Arg86 and 124-126 (GTR).

This sequence belongs to the RNase PH family. As to quaternary structure, homohexameric ring arranged as a trimer of dimers.

The enzyme catalyses tRNA(n+1) + phosphate = tRNA(n) + a ribonucleoside 5'-diphosphate. In terms of biological role, phosphorolytic 3'-5' exoribonuclease that plays an important role in tRNA 3'-end maturation. Removes nucleotide residues following the 3'-CCA terminus of tRNAs; can also add nucleotides to the ends of RNA molecules by using nucleoside diphosphates as substrates, but this may not be physiologically important. Probably plays a role in initiation of 16S rRNA degradation (leading to ribosome degradation) during starvation. The protein is Ribonuclease PH of Histophilus somni (strain 2336) (Haemophilus somnus).